Here is a 497-residue protein sequence, read N- to C-terminus: Glutathione hydrolase 6 (497 aa).

The interval 1 to 34 (MDATTGPVHYHKLQLWEPGVESEEEEEEEEEEIA) is disordered. Residues 1–51 (MDATTGPVHYHKLQLWEPGVESEEEEEEEEEEIAEPLVLSLRRLQNTPRNE) lie on the Cytoplasmic side of the membrane. Acidic residues predominate over residues 20 to 34 (VESEEEEEEEEEEIA). Residues 52–72 (VGGLPGAWARLLAGLLLLAVS) form a helical; Signal-anchor for type II membrane protein membrane-spanning segment. The Extracellular segment spans residues 73–497 (SSLALRQLHS…PSGCCPFQGY (425 aa)). N-linked (GlcNAc...) asparagine glycans are attached at residues N164, N169, N367, and N378.

This sequence belongs to the gamma-glutamyltransferase family. As to quaternary structure, heterodimer composed of the light and heavy chains. The active site is located in the light chain. Post-translationally, cleaved by autocatalysis into a large and a small subunit and the autocatalytic cleavage is essential to the functional activation of the enzyme.

It localises to the membrane. The catalysed reaction is an N-terminal (5-L-glutamyl)-[peptide] + an alpha-amino acid = 5-L-glutamyl amino acid + an N-terminal L-alpha-aminoacyl-[peptide]. It catalyses the reaction glutathione + H2O = L-cysteinylglycine + L-glutamate. The enzyme catalyses an S-substituted glutathione + H2O = an S-substituted L-cysteinylglycine + L-glutamate. It participates in sulfur metabolism; glutathione metabolism. Functionally, hydrolyzes and transfers gamma-glutamyl moieties from glutathione and other gamma-glutamyl compounds to acceptors. This is Glutathione hydrolase 6 from Mus musculus (Mouse).